The sequence spans 363 residues: Galactokinase (363 aa).

16-19 (EHTD) is a substrate binding site. ATP is bound by residues Ser-50 and 103–109 (GSGLSSS). 2 residues coordinate Mg(2+): Ser-109 and Glu-141. Asp-153 functions as the Proton acceptor in the catalytic mechanism. Substrate is bound at residue Tyr-205.

It belongs to the GHMP kinase family. GalK subfamily.

It localises to the cytoplasm. The enzyme catalyses alpha-D-galactose + ATP = alpha-D-galactose 1-phosphate + ADP + H(+). The protein operates within carbohydrate metabolism; galactose metabolism. Catalyzes the transfer of the gamma-phosphate of ATP to D-galactose to form alpha-D-galactose-1-phosphate (Gal-1-P). This chain is Galactokinase, found in Mycobacterium bovis (strain ATCC BAA-935 / AF2122/97).